We begin with the raw amino-acid sequence, 141 residues long: Sperm protein associated with the nucleus on the X chromosome N3 (141 aa).

The segment covering 1–10 (MEQPTSSTNG) has biased composition (polar residues). Disordered regions lie at residues 1–47 (MEQP…TKTS) and 66–141 (NQLE…SGED). Over residues 11–26 (EKTKSPCESNNKKNDE) the composition is skewed to basic and acidic residues. Positions 66 to 80 (NQLENEQSQENSINP) are enriched in polar residues. The span at 84 to 103 (EEDEGVDLSEGSSNEDEDLG) shows a compositional bias: acidic residues. A compositionally biased stretch (polar residues) spans 132 to 141 (EGSSQDSGED).

It belongs to the SPAN-X family.

The sequence is that of Sperm protein associated with the nucleus on the X chromosome N3 (SPANXN3) from Homo sapiens (Human).